The following is an 80-amino-acid chain: Waprin-Phi3 (80 aa).

An N-terminal signal peptide occupies residues 1–22 (MKPWILLLLAGLLILSTQLTTA). Positions 31–78 (PKVKPGECPKVKIPPDYPCNQYCVWDFDCEGNKKCCPVGCAKECFPPG) constitute a WAP domain. Intrachain disulfides connect Cys-38–Cys-66, Cys-49–Cys-70, Cys-53–Cys-65, and Cys-59–Cys-74.

The protein belongs to the venom waprin family. As to expression, expressed by the venom gland.

The protein localises to the secreted. Its function is as follows. Damages membranes of susceptible bacteria. Has no hemolytic activity. Not toxic to mice. Does not inhibit the proteinases elastase and cathepsin G. The polypeptide is Waprin-Phi3 (Philodryas olfersii (Green snake)).